We begin with the raw amino-acid sequence, 193 residues long: Probable nicotinate-nucleotide adenylyltransferase (193 aa).

Belongs to the NadD family.

It carries out the reaction nicotinate beta-D-ribonucleotide + ATP + H(+) = deamido-NAD(+) + diphosphate. It functions in the pathway cofactor biosynthesis; NAD(+) biosynthesis; deamido-NAD(+) from nicotinate D-ribonucleotide: step 1/1. In terms of biological role, catalyzes the reversible adenylation of nicotinate mononucleotide (NaMN) to nicotinic acid adenine dinucleotide (NaAD). The sequence is that of Probable nicotinate-nucleotide adenylyltransferase from Flavobacterium johnsoniae (strain ATCC 17061 / DSM 2064 / JCM 8514 / BCRC 14874 / CCUG 350202 / NBRC 14942 / NCIMB 11054 / UW101) (Cytophaga johnsonae).